Reading from the N-terminus, the 428-residue chain is Tubby-like F-box protein 5 (428 aa).

The segment at 17–65 (IGSMSRRAADGRAGGGRGGSRHSWPVLWSEQQQPPQQQQLQRQEHQQQQ) is disordered. A compositionally biased stretch (low complexity) spans 47–65 (QQQPPQQQQLQRQEHQQQQ). The F-box domain occupies 65–117 (QGRWANLPPELLLDVIQRVEASEATWPARRQVVACAAVCRSWREVTKEVVKTL).

The protein belongs to the TUB family. As to expression, ubiquitous.

This Oryza sativa subsp. japonica (Rice) protein is Tubby-like F-box protein 5 (TULP5).